A 300-amino-acid polypeptide reads, in one-letter code: Histone deacetylase HDT3 (300 aa).

Positions 98 to 112 are enriched in acidic residues; it reads EDEMDLDSEDEDEEL. A disordered region spans residues 98–300; that stretch reads EDEMDLDSED…AHSKAKHGGK (203 aa). A compositionally biased stretch (basic and acidic residues) spans 119–132; the sequence is ENGKADEKKQKSQE. Residues 151-197 show a composition bias toward acidic residues; it reads DDDSDEDETDDSDEDETDDSDEGLSPEEGDDDSSDEDDTSDDEEEDT. Residues 198-211 are compositionally biased toward basic and acidic residues; that stretch reads PTPKKPEVGKKRAA. The span at 265–275 shows a compositional bias: low complexity; it reads SPKSAPKSGVP. The C2H2-type zinc-finger motif lies at 274–297; that stretch reads VPCKSCSKSFISETAPQAHSKAKH. The segment covering 279–290 has biased composition (polar residues); the sequence is CSKSFISETAPQ.

Belongs to the histone deacetylase HD2 family. In terms of assembly, multimer. Possibly forms a homotrimer with HDT1 and/or HDT2.

The protein localises to the nucleus. Its subcellular location is the nucleolus. Functionally, mediates the deacetylation of lysine residues on the N-terminal part of the core histones (H2A, H2B, H3 and H4). Histone deacetylation gives a tag for epigenetic repression and plays an important role in transcriptional regulation, cell cycle progression and developmental events. The protein is Histone deacetylase HDT3 (HDT3) of Zea mays (Maize).